Here is a 492-residue protein sequence, read N- to C-terminus: Beta-glucosidase 38 (492 aa).

An N-terminal signal peptide occupies residues 1 to 21 (MNMPLLLLIAIVVVSLSHGNG). Gln45 provides a ligand contact to a beta-D-glucoside. Residues Asn73 and Asn77 are each glycosylated (N-linked (GlcNAc...) asparagine). Residues His146 and 191-192 (NE) each bind a beta-D-glucoside. Catalysis depends on Glu192, which acts as the Proton donor. Residues Cys211 and Cys214 are joined by a disulfide bond. Asn310 carries an N-linked (GlcNAc...) asparagine glycan. An a beta-D-glucoside-binding site is contributed by Tyr331. The N-linked (GlcNAc...) asparagine glycan is linked to Asn341. Glu400 provides a ligand contact to a beta-D-glucoside. Glu400 functions as the Nucleophile in the catalytic mechanism. Residue Asn408 is glycosylated (N-linked (GlcNAc...) asparagine). Residues Trp447, 454–455 (EW), and Phe463 contribute to the a beta-D-glucoside site.

Belongs to the glycosyl hydrolase 1 family.

It carries out the reaction Hydrolysis of terminal, non-reducing beta-D-glucosyl residues with release of beta-D-glucose.. The sequence is that of Beta-glucosidase 38 (BGLU38) from Oryza sativa subsp. japonica (Rice).